Reading from the N-terminus, the 279-residue chain is Acetylglutamate kinase (279 aa).

Residues 64-65 (GG), Arg86, and Asn177 each bind substrate.

Belongs to the acetylglutamate kinase family. ArgB subfamily.

It localises to the cytoplasm. The catalysed reaction is N-acetyl-L-glutamate + ATP = N-acetyl-L-glutamyl 5-phosphate + ADP. Its pathway is amino-acid biosynthesis; L-arginine biosynthesis; N(2)-acetyl-L-ornithine from L-glutamate: step 2/4. Functionally, catalyzes the ATP-dependent phosphorylation of N-acetyl-L-glutamate. The sequence is that of Acetylglutamate kinase from Campylobacter jejuni subsp. jejuni serotype O:2 (strain ATCC 700819 / NCTC 11168).